Consider the following 1025-residue polypeptide: MESFTNDRLQLPRNMIENSMFEEEPDVVDLAKEPCLHPLEPDEVEYEPRGSRLLVRGLGEHEMDEDEEDYESSAKLLGMSFMNRSSGLRNSAAGYRQSPDGTCSLPSARTLVICVFVIVVAVSVIMVIYLLPRCTFTKEGCHKTNQSAELIQPVATNGKVFPWAQIRLPTAIIPLCYELSLHPNLTSMTFRGSVTISLQALQDTRDIILHSTGHNISRVTFMSAVSSQEKQVEILEYPYHEQIAVVAPEPLLTGHNYTLKIEYSANISNSYYGFYGITYTDKSNEKKYFAATQFEPLAARSAFPCFDEPAFKATFIIKITRNEHHTALSNMPKKSSVPAEEGLIQDEFSESVKMSTYLVAFIVGEMRNLSQDVNGTLVSVYAVPEKIGQVHHALDTTIKLLEFYQTYFEIQYPLKKLDLVAIPDFEAGAMENWGLLTFREETLLYDNATSSVADRKLVTKIIAHELAHQWFGNLVTMQWWNDLWLNEGFATFMEYFSVEKIFKELNSYEDFLDARFKTMRKDSLNSSHPISSSVQSSEQIEEMFDSLSYFKGASLLLMLKSYLSEDVFRHAVILYLHNHSYAAIQSDDLWDSFNEVTDKTLDVKKMMKTWTLQKGFPLVTVQRKGTELLLQQERFFLRMQPESQPSDTSHLWHIPISYVTDGRNYSEYRSVSLLDKKSDVINLTEQVQWVKVNSNMTGYYIVHYAHDDWTALINQLKRNPYVLSDKDRANLINNIFELAGLGKVPLRMAFDLIDYLKNETHTAPITEALFQTNLIYNLLEKLGHMDLSSRLVARVHKLLQNQIQQQTWTDEGTPSMRELRSALLEFACAHSLENCTTMATNLFDSWMASNGTQSLPTDVMVTVFKVGARTEKGWLFLFSMYSSMGSEAEKNKILEALASSEDVHKLYWLMKSSLDGDIIRTQKLSLIIRTVGRHFPGHLLAWDFVKENWNKLVHKFHLGSYTIQSIVAGSTHLFSTKTHLSEVQAFFENQSEATLKLRCVQEALEVIQLNIQWMVRNLKTLSQWL.

Met-1 is subject to N-acetylmethionine. The Cytoplasmic portion of the chain corresponds to Met-1 to Arg-109. The Dileucine internalization motif signature appears at Leu-53–Leu-54. A Phosphotyrosine modification is found at Tyr-70. Residues Leu-76–Leu-77 carry the Dileucine internalization motif motif. Phosphoserine is present on residues Ser-80 and Ser-91. Positions Arg-96–Gly-101 are tankyrase binding. Residues Thr-110–Leu-131 form a helical; Signal-anchor for type II membrane protein membrane-spanning segment. Over Pro-132–Leu-1025 the chain is Extracellular. N-linked (GlcNAc...) asparagine glycosylation is found at Asn-145, Asn-184, Asn-215, Asn-256, and Asn-266. Glu-295 is a substrate binding site. Residues Asn-368 and Asn-374 are each glycosylated (N-linked (GlcNAc...) asparagine). A substrate-binding site is contributed by Gly-428–Asn-432. N-linked (GlcNAc...) asparagine glycosylation occurs at Asn-447. His-464 provides a ligand contact to Zn(2+). Catalysis depends on Glu-465, which acts as the Proton acceptor. 2 residues coordinate Zn(2+): His-468 and Glu-487. 9 N-linked (GlcNAc...) asparagine glycosylation sites follow: Asn-525, Asn-578, Asn-664, Asn-682, Asn-695, Asn-758, Asn-834, Asn-850, and Asn-989.

This sequence belongs to the peptidase M1 family. Homodimer. Binds tankyrases 1 and 2. Zn(2+) is required as a cofactor.

It localises to the cell membrane. The protein resides in the endomembrane system. It catalyses the reaction Release of an N-terminal amino acid, Cys-|-Xaa-, in which the half-cystine residue is involved in a disulfide loop, notably in oxytocin or vasopressin. Hydrolysis rates on a range of aminoacyl arylamides exceed that for the cystinyl derivative, however.. Functionally, release of an N-terminal amino acid, cleave before cysteine, leucine as well as other amino acids. Degrades peptide hormones such as oxytocin, vasopressin and angiotensin III, and plays a role in maintaining homeostasis during pregnancy. May be involved in the inactivation of neuronal peptides in the brain. Cleaves Met-enkephalin and dynorphin. Binds angiotensin IV and may be the angiotensin IV receptor in the brain. The polypeptide is Leucyl-cystinyl aminopeptidase (Lnpep) (Mus musculus (Mouse)).